Here is a 90-residue protein sequence, read N- to C-terminus: Cytochrome c7 (90 aa).

The signal sequence occupies residues 1–20; sequence MKRIIASLALSVFCAGLAFA. Heme-binding residues include His-37, His-40, Cys-47, Cys-50, His-51, His-67, Cys-70, Cys-73, His-74, Cys-84, Cys-87, and His-88.

In terms of processing, binds 3 heme groups per subunit.

In terms of biological role, may be involved in anaerobic iron respiration. This Geobacter metallireducens (strain ATCC 53774 / DSM 7210 / GS-15) protein is Cytochrome c7.